The sequence spans 353 residues: Casein kinase II subunit alpha (353 aa).

The Protein kinase domain maps to 39–324; the sequence is YQLVRKLGRG…AREAMDHPYF (286 aa). Residues 45 to 53 and Lys68 contribute to the ATP site; that span reads LGRGKYSEV. Asp156 functions as the Proton acceptor in the catalytic mechanism. The interval 334–353 is disordered; sequence MVSSNSPTPNALQGPISTTE.

It belongs to the protein kinase superfamily. Ser/Thr protein kinase family. CK2 subfamily. As to quaternary structure, tetramer of two alpha and two beta chains.

The enzyme catalyses L-seryl-[protein] + ATP = O-phospho-L-seryl-[protein] + ADP + H(+). It catalyses the reaction L-threonyl-[protein] + ATP = O-phospho-L-threonyl-[protein] + ADP + H(+). Casein kinases are operationally defined by their preferential utilization of acidic proteins such as caseins as substrates. The alpha chain contains the catalytic site. May participate in Wnt signaling. In Spodoptera frugiperda (Fall armyworm), this protein is Casein kinase II subunit alpha.